The following is a 521-amino-acid chain: tRNA (adenine(58)-N(1))-methyltransferase non-catalytic subunit trm6 (521 aa).

Disordered stretches follow at residues 1–24 (METETPMDVETKSTTSNTNDNNNN), 305–336 (IYDKQVKEKEKEKEKDENVKDEKESGEEAKTI), and 452–521 (QKST…KIDE). The segment covering 12–24 (KSTTSNTNDNNNN) has biased composition (low complexity). The span at 308-334 (KQVKEKEKEKEKDENVKDEKESGEEAK) shows a compositional bias: basic and acidic residues. Low complexity-rich tracts occupy residues 452 to 476 (QKSTTTTTTTTTTTTNNSINPTKTT) and 487 to 502 (DATTSSSSSSTAAATT). A compositionally biased stretch (basic and acidic residues) spans 510-521 (SESALKKRKIDE).

This sequence belongs to the TRM6/GCD10 family. As to quaternary structure, heterotetramer; composed of two copies of trmt6 and two copies of trmt61a.

It is found in the nucleus. In terms of biological role, substrate-binding subunit of tRNA (adenine-N(1)-)-methyltransferase, which catalyzes the formation of N(1)-methyladenine at position 58 (m1A58) in initiator methionyl-tRNA. This is tRNA (adenine(58)-N(1))-methyltransferase non-catalytic subunit trm6 (trmt6) from Dictyostelium discoideum (Social amoeba).